Reading from the N-terminus, the 732-residue chain is Beta-galactosidase 5 (732 aa).

The signal sequence occupies residues 1–23; the sequence is MGTTILVLSKILTFLLTTMLIGS. Glutamate 187 (proton donor) is an active-site residue. Glutamate 256 (nucleophile) is an active-site residue. Asparagine 466 is a glycosylation site (N-linked (GlcNAc...) asparagine).

This sequence belongs to the glycosyl hydrolase 35 family. As to expression, expressed in leaves and flowers.

The protein resides in the secreted. It localises to the extracellular space. The protein localises to the apoplast. It catalyses the reaction Hydrolysis of terminal non-reducing beta-D-galactose residues in beta-D-galactosides.. This Arabidopsis thaliana (Mouse-ear cress) protein is Beta-galactosidase 5 (BGAL5).